The sequence spans 647 residues: DNA ligase (647 aa).

NAD(+) is bound by residues Asp30–Asp34, Ser79–Met80, and Glu105. Lys107 acts as the N6-AMP-lysine intermediate in catalysis. Arg128, Glu162, and Lys301 together coordinate NAD(+). Residues Cys395, Cys398, Cys411, and Cys416 each contribute to the Zn(2+) site. A BRCT domain is found at Lys570 to Glu647.

The protein belongs to the NAD-dependent DNA ligase family. LigA subfamily. The cofactor is Mg(2+). Requires Mn(2+) as cofactor.

It carries out the reaction NAD(+) + (deoxyribonucleotide)n-3'-hydroxyl + 5'-phospho-(deoxyribonucleotide)m = (deoxyribonucleotide)n+m + AMP + beta-nicotinamide D-nucleotide.. Its function is as follows. DNA ligase that catalyzes the formation of phosphodiester linkages between 5'-phosphoryl and 3'-hydroxyl groups in double-stranded DNA using NAD as a coenzyme and as the energy source for the reaction. It is essential for DNA replication and repair of damaged DNA. The protein is DNA ligase of Campylobacter jejuni subsp. jejuni serotype O:6 (strain 81116 / NCTC 11828).